The following is a 91-amino-acid chain: Acylphosphatase (91 aa).

Residues 3 to 91 form the Acylphosphatase-like domain; the sequence is CLRAIVKGKV…ANYSDFRIKH (89 aa). Active-site residues include Arg-18 and Asn-36.

The protein belongs to the acylphosphatase family.

It carries out the reaction an acyl phosphate + H2O = a carboxylate + phosphate + H(+). The protein is Acylphosphatase (acyP) of Dehalococcoides mccartyi (strain ATCC BAA-2100 / JCM 16839 / KCTC 5957 / BAV1).